Consider the following 70-residue polypeptide: Phycobilisome 8.1 kDa linker polypeptide, phycocyanin-associated, rod (70 aa).

The region spanning 5 to 63 (SRSFQVEVSGLHQNEVTNQNNYPIRSSGSVFITIPFSRFNEELQRINRLGGKIVNIQPL) is the CpcD-like domain.

This sequence belongs to the phycobilisome linker protein family.

It is found in the cellular thylakoid membrane. Functionally, rod linker protein, associated with phycocyanin. Linker polypeptides determine the state of aggregation and the location of the disk-shaped phycobiliprotein units within the phycobilisome and modulate their spectroscopic properties in order to mediate a directed and optimal energy transfer. This Microchaete diplosiphon (Fremyella diplosiphon) protein is Phycobilisome 8.1 kDa linker polypeptide, phycocyanin-associated, rod (cpcD3).